A 234-amino-acid chain; its full sequence is Large ribosomal subunit protein uL1 (234 aa).

It belongs to the universal ribosomal protein uL1 family. As to quaternary structure, part of the 50S ribosomal subunit.

Binds directly to 23S rRNA. The L1 stalk is quite mobile in the ribosome, and is involved in E site tRNA release. Functionally, protein L1 is also a translational repressor protein, it controls the translation of the L11 operon by binding to its mRNA. The polypeptide is Large ribosomal subunit protein uL1 (Psychromonas ingrahamii (strain DSM 17664 / CCUG 51855 / 37)).